A 157-amino-acid polypeptide reads, in one-letter code: Thiosulfate sulfurtransferase/rhodanese-like domain-containing protein 3 (157 aa).

The Rhodanese domain maps to 52–154 (NSKDIMLIDV…WVTYEISEEK (103 aa)). Lys96 is subject to N6-succinyllysine. Cys114 functions as the Cysteine persulfide intermediate in the catalytic mechanism.

The polypeptide is Thiosulfate sulfurtransferase/rhodanese-like domain-containing protein 3 (Tstd3) (Mus musculus (Mouse)).